An 824-amino-acid polypeptide reads, in one-letter code: Glycerol-3-phosphate acyltransferase (824 aa).

An HXXXXD motif motif is present at residues 302 to 307 (CHRSHM).

It belongs to the GPAT/DAPAT family.

The protein localises to the cell inner membrane. The catalysed reaction is sn-glycerol 3-phosphate + an acyl-CoA = a 1-acyl-sn-glycero-3-phosphate + CoA. It participates in phospholipid metabolism; CDP-diacylglycerol biosynthesis; CDP-diacylglycerol from sn-glycerol 3-phosphate: step 1/3. This chain is Glycerol-3-phosphate acyltransferase, found in Actinobacillus pleuropneumoniae serotype 7 (strain AP76).